Here is a 290-residue protein sequence, read N- to C-terminus: Homeobox protein EMX1 (290 aa).

Positions 192–251 (PKRIRTAFSPSQLLRLERAFEKNHYVVGAERKQLAGSLSLSETQVKVWFQNRRTKYKRQK) form a DNA-binding region, homeobox. The interval 249 to 290 (RQKLEEEGPESEQKKKGSHHINRWRIATKQANGEDIDVTSND) is disordered. The segment covering 250–263 (QKLEEEGPESEQKK) has biased composition (basic and acidic residues).

This sequence belongs to the EMX homeobox family. Interacts with WRD11 (via the N-terminal and the central portion of the protein); the interaction associates EMX1 with GLI3. As to expression, cerebral cortex.

It is found in the nucleus. The protein localises to the cytoplasm. Functionally, transcription factor, which in cooperation with EMX2, acts to generate the boundary between the roof and archipallium in the developing brain. May function in combinations with OTX1/2 to specify cell fates in the developing central nervous system. This chain is Homeobox protein EMX1, found in Homo sapiens (Human).